The sequence spans 140 residues: Endoribonuclease YbeY (140 aa).

3 residues coordinate Zn(2+): H101, H105, and H111.

This sequence belongs to the endoribonuclease YbeY family. The cofactor is Zn(2+).

The protein localises to the cytoplasm. In terms of biological role, single strand-specific metallo-endoribonuclease involved in late-stage 70S ribosome quality control and in maturation of the 3' terminus of the 16S rRNA. The sequence is that of Endoribonuclease YbeY from Aliarcobacter butzleri (strain RM4018) (Arcobacter butzleri).